We begin with the raw amino-acid sequence, 622 residues long: Membrane protein insertase YidC (622 aa).

A helical membrane pass occupies residues 6–26 (IVLLIIFSTSLLFLWDAWVKE). Residues 47–87 (TQSKNNDGLPIPGSELTASQTGSDLNGIPSSGDTADSVTPR) are disordered. The segment covering 62–83 (LTASQTGSDLNGIPSSGDTADS) has biased composition (polar residues). 3 consecutive transmembrane segments (helical) span residues 381–401 (WGIA…PLSA), 451–471 (FPIL…LAAV), and 525–545 (PVAF…YSLV). A disordered region spans residues 563-622 (TAPSQDAPESPASKDAPELPVSNQVINDSENTEAPASGPADSPKKPVNIPRRMHKRTRKK). Residues 583–596 (VSNQVINDSENTEA) are compositionally biased toward polar residues. Positions 613–622 (RRMHKRTRKK) are enriched in basic residues.

It belongs to the OXA1/ALB3/YidC family. Type 1 subfamily. As to quaternary structure, interacts with the Sec translocase complex via SecD. Specifically interacts with transmembrane segments of nascent integral membrane proteins during membrane integration.

The protein resides in the cell inner membrane. Required for the insertion and/or proper folding and/or complex formation of integral membrane proteins into the membrane. Involved in integration of membrane proteins that insert both dependently and independently of the Sec translocase complex, as well as at least some lipoproteins. Aids folding of multispanning membrane proteins. This is Membrane protein insertase YidC from Nitrosomonas eutropha (strain DSM 101675 / C91 / Nm57).